A 730-amino-acid polypeptide reads, in one-letter code: Polyribonucleotide nucleotidyltransferase (730 aa).

Residues D489 and D495 each contribute to the Mg(2+) site. The KH domain occupies 556–615 (PKIDTIKVDVDKIKIVIGKGGETIDKIIEETGVKIDIDEDGNIAIYSSDQEAINRTKEII). The S1 motif domain occupies 625–693 (GEIYEAEVVR…DKGRIDASMK (69 aa)). Residues 691 to 730 (SMKALLPRPPRSEKSNKEDHQSVRHHGSPKDDKGKEKYDK) are disordered. The segment covering 700 to 730 (PRSEKSNKEDHQSVRHHGSPKDDKGKEKYDK) has biased composition (basic and acidic residues).

This sequence belongs to the polyribonucleotide nucleotidyltransferase family. The cofactor is Mg(2+).

It localises to the cytoplasm. The enzyme catalyses RNA(n+1) + phosphate = RNA(n) + a ribonucleoside 5'-diphosphate. Its function is as follows. Involved in mRNA degradation. Catalyzes the phosphorolysis of single-stranded polyribonucleotides processively in the 3'- to 5'-direction. This is Polyribonucleotide nucleotidyltransferase from Streptococcus mutans serotype c (strain ATCC 700610 / UA159).